We begin with the raw amino-acid sequence, 293 residues long: uncharacterized protein (293 aa).

Basic residues predominate over residues 1-10 (MHMQLRKRKR). Positions 1-28 (MHMQLRKRKRVDYSGRNQTSDPPSTTTA) are disordered. A compositionally biased stretch (polar residues) spans 15 to 28 (GRNQTSDPPSTTTA).

It is found in the nucleus. This is an uncharacterized protein from Saccharomyces cerevisiae (strain ATCC 204508 / S288c) (Baker's yeast).